The chain runs to 376 residues: Succinyl-diaminopimelate desuccinylase (376 aa).

A Zn(2+)-binding site is contributed by His67. Asp69 is an active-site residue. Residue Asp100 coordinates Zn(2+). Glu134 functions as the Proton acceptor in the catalytic mechanism. Residues Glu135, Glu163, and His349 each contribute to the Zn(2+) site.

Belongs to the peptidase M20A family. DapE subfamily. Homodimer. Zn(2+) serves as cofactor. Co(2+) is required as a cofactor.

The catalysed reaction is N-succinyl-(2S,6S)-2,6-diaminopimelate + H2O = (2S,6S)-2,6-diaminopimelate + succinate. It functions in the pathway amino-acid biosynthesis; L-lysine biosynthesis via DAP pathway; LL-2,6-diaminopimelate from (S)-tetrahydrodipicolinate (succinylase route): step 3/3. In terms of biological role, catalyzes the hydrolysis of N-succinyl-L,L-diaminopimelic acid (SDAP), forming succinate and LL-2,6-diaminopimelate (DAP), an intermediate involved in the bacterial biosynthesis of lysine and meso-diaminopimelic acid, an essential component of bacterial cell walls. The polypeptide is Succinyl-diaminopimelate desuccinylase (Nitrosomonas europaea (strain ATCC 19718 / CIP 103999 / KCTC 2705 / NBRC 14298)).